We begin with the raw amino-acid sequence, 379 residues long: Cytochrome b (379 aa).

4 helical membrane-spanning segments follow: residues 33-53 (FGSLLGMCLMIQILTGLFLAM), 77-98 (WLIRYLHANGASMFFICLFIHV), 113-133 (WNIGIILFLTTMATAFVGYVL), and 178-198 (FFAFHFILPFIITAFALVHLL). Positions 83 and 97 each coordinate heme b. The heme b site is built by histidine 182 and histidine 196. Histidine 201 is an a ubiquinone binding site. The next 4 helical transmembrane spans lie at 226 to 246 (TKDLLGIFLLLLVLMILALFF), 288 to 308 (LGGVLALVLSILILAAFPLLN), 320 to 340 (ITQVIYWIFIANLLVLTWIGG), and 347 to 367 (FTMIGQIASITYFAIIIILIP).

The protein belongs to the cytochrome b family. As to quaternary structure, the cytochrome bc1 complex contains 11 subunits: 3 respiratory subunits (MT-CYB, CYC1 and UQCRFS1), 2 core proteins (UQCRC1 and UQCRC2) and 6 low-molecular weight proteins (UQCRH/QCR6, UQCRB/QCR7, UQCRQ/QCR8, UQCR10/QCR9, UQCR11/QCR10 and a cleavage product of UQCRFS1). This cytochrome bc1 complex then forms a dimer. It depends on heme b as a cofactor.

It is found in the mitochondrion inner membrane. Its function is as follows. Component of the ubiquinol-cytochrome c reductase complex (complex III or cytochrome b-c1 complex) that is part of the mitochondrial respiratory chain. The b-c1 complex mediates electron transfer from ubiquinol to cytochrome c. Contributes to the generation of a proton gradient across the mitochondrial membrane that is then used for ATP synthesis. This is Cytochrome b (MT-CYB) from Akodon spegazzinii (Spegazzini's grass mouse).